We begin with the raw amino-acid sequence, 281 residues long: Urease accessory protein UreD 2 (281 aa).

The protein belongs to the UreD family. As to quaternary structure, ureD, UreF and UreG form a complex that acts as a GTP-hydrolysis-dependent molecular chaperone, activating the urease apoprotein by helping to assemble the nickel containing metallocenter of UreC. The UreE protein probably delivers the nickel.

Its subcellular location is the cytoplasm. In terms of biological role, required for maturation of urease via the functional incorporation of the urease nickel metallocenter. In Pseudomonas syringae pv. syringae (strain B728a), this protein is Urease accessory protein UreD 2.